Reading from the N-terminus, the 233-residue chain is Riboflavin kinase (233 aa).

Positions 1-99 (MSGATSTGDV…YRRIFEDPGE (99 aa)) are unknown. The segment at 100–233 (LALAGTVTSG…DDEVTIRVEA (134 aa)) is riboflavin kinase. 109–114 (GMGEGR) is a binding site for CDP. The Mg(2+) site is built by Thr-138 and Asn-140. FMN contacts are provided by Thr-200 and Glu-208. 213–216 (VKLR) serves as a coordination point for CDP.

It belongs to the archaeal riboflavin kinase family. It depends on Mg(2+) as a cofactor.

The catalysed reaction is riboflavin + CTP = CDP + FMN + H(+). It participates in cofactor biosynthesis; FMN biosynthesis; FMN from riboflavin (CTP route): step 1/1. Its function is as follows. Catalyzes the CTP-dependent phosphorylation of riboflavin (vitamin B2) to form flavin mononucleotide (FMN). The polypeptide is Riboflavin kinase (ribK) (Halobacterium salinarum (strain ATCC 700922 / JCM 11081 / NRC-1) (Halobacterium halobium)).